Here is a 121-residue protein sequence, read N- to C-terminus: Large ribosomal subunit protein P2 (121 aa).

A compositionally biased stretch (low complexity) spans 72–99; that stretch reads VAVPSGGAPAAATAAAEAPKGGDKAAAP. Residues 72-121 are disordered; the sequence is VAVPSGGAPAAATAAAEAPKGGDKAAAPPKEEKKEESEESDADMGFSPFD.

The protein belongs to the eukaryotic ribosomal protein P1/P2 family. In terms of assembly, P1 and P2 exist as dimers at the large ribosomal subunit. In terms of processing, phosphorylated.

Its function is as follows. Plays an important role in the elongation step of protein synthesis. The sequence is that of Large ribosomal subunit protein P2 from Taenia solium (Pork tapeworm).